The following is a 1512-amino-acid chain: Lysophospholipase NTE1 (1512 aa).

At 1 to 48 (MAAPDAMTSLVKSSVALLSSAHESLPTSLAAMKTAETAPSSTFGILGR) the chain is on the cytoplasmic side. A helical transmembrane segment spans residues 49 to 69 (VILSILSVLPTLLFWVSYTLP). The Lumenal segment spans residues 70–83 (TWLFTLFSMSLTFT). A helical transmembrane segment spans residues 84-104 (MNFTTLMLVLVFVVSTISYFV). Over 105–1512 (RYRYLTMYAR…RTMAPRRASI (1408 aa)) the chain is Cytoplasmic. Disordered stretches follow at residues 204 to 230 (NREESDSDEDDGELQGESGGGSAQAHR), 262 to 362 (RHDE…AHPD), 534 to 556 (TQMSRGTGRSGRSSFSQPYQHDV), and 740 to 770 (TEDDLFGPPLQPTATNTSLRNGENSKKKRSR). Acidic residues predominate over residues 208–217 (SDSDEDDGEL). Polar residues predominate over residues 268 to 291 (GPSSSTPMSPQHRPSMTRNSSFNM). Basic residues predominate over residues 343 to 358 (HSKQRRSPSRSTKPKS). Positions 537 to 549 (SRGTGRSGRSSFS) are enriched in low complexity. Residues 669 to 793 (LSAS…SNRS) and 830 to 950 (RLTT…IASR) each bind a nucleoside 3',5'-cyclic phosphate. Positions 751 to 761 (PTATNTSLRNG) are enriched in polar residues. The PNPLA domain occupies 1209–1373 (LVLGGGGARG…IDNLTVAHMK (165 aa)). The GXGXXG motif lies at 1213–1218 (GGGARG). Residues 1240 to 1244 (GTSIG) carry the GXSXG motif. Residue S1242 is the Nucleophile of the active site. The active-site Proton acceptor is D1360. A DGA/G motif is present at residues 1360-1362 (DGG).

This sequence belongs to the NTE family.

It localises to the endoplasmic reticulum membrane. The enzyme catalyses a 1-acyl-sn-glycero-3-phosphocholine + H2O = sn-glycerol 3-phosphocholine + a fatty acid + H(+). Its activity is regulated as follows. Inhibited by organophosphorus esters. Intracellular phospholipase B that catalyzes the double deacylation of phosphatidylcholine (PC) to glycerophosphocholine (GroPCho). Plays an important role in membrane lipid homeostasis. Responsible for the rapid PC turnover in response to inositol, elevated temperatures, or when choline is present in the growth medium. This Phaeosphaeria nodorum (strain SN15 / ATCC MYA-4574 / FGSC 10173) (Glume blotch fungus) protein is Lysophospholipase NTE1 (NTE1).